Reading from the N-terminus, the 507-residue chain is Cytochrome c-type protein ImcH (507 aa).

Helical transmembrane passes span 14 to 34 (ISLI…AFIA), 45 to 65 (YIGL…LILV), and 100 to 120 (LFIF…VASI). C132, C136, M140, H152, C157, C160, H161, D400, C449, C452, H453, C487, C490, H491, and E496 together coordinate heme.

Belongs to the NapC/NirT/NrfH family. Binds 4 heme c groups covalently per subunit.

The protein resides in the cell inner membrane. In terms of biological role, redox protein involved in a high-potential metal respiratory pathway. Is required only for electron transfer to terminal extracellular electron acceptors with redox potentials higher than -0.1 V. ImcH likely transfers electrons from the quinone pool to a periplasmic acceptor. This chain is Cytochrome c-type protein ImcH, found in Geobacter sulfurreducens (strain ATCC 51573 / DSM 12127 / PCA).